A 238-amino-acid chain; its full sequence is 1-(5-phosphoribosyl)-5-[(5-phosphoribosylamino)methylideneamino] imidazole-4-carboxamide isomerase (238 aa).

Aspartate 8 (proton acceptor) is an active-site residue. Aspartate 129 functions as the Proton donor in the catalytic mechanism.

It belongs to the HisA/HisF family.

The protein resides in the cytoplasm. The enzyme catalyses 1-(5-phospho-beta-D-ribosyl)-5-[(5-phospho-beta-D-ribosylamino)methylideneamino]imidazole-4-carboxamide = 5-[(5-phospho-1-deoxy-D-ribulos-1-ylimino)methylamino]-1-(5-phospho-beta-D-ribosyl)imidazole-4-carboxamide. The protein operates within amino-acid biosynthesis; L-histidine biosynthesis; L-histidine from 5-phospho-alpha-D-ribose 1-diphosphate: step 4/9. This Paracoccus denitrificans (strain Pd 1222) protein is 1-(5-phosphoribosyl)-5-[(5-phosphoribosylamino)methylideneamino] imidazole-4-carboxamide isomerase.